A 336-amino-acid chain; its full sequence is MFYPFIRKALFQLDPERAHEFTFRQLHRISGTPLIGLLRQSVPSKPVSCMGLSFKNPLGLAAGLDKDGECIDALGAMGFGSIEVGTVTPRPQPGNEKPRLFRIVEAEGLINRMGFNNLGVDNLVENVKKSHFGGILGINIGKNKDTPVEQGKDDYLMCMDKVYSYAGYIAVNISSPNTPGLRTLQYGEALDDLLAAIKTKQAELQQKHARYVPVAVKIAPDLSHEELVQIADSLVRHQIDGVIATNTTLDRSLVNGLNHCAQSGGLSGRPLQLKSTEIIRQLSAELQGRLPIIGVGGIDSVIAAREKMQAGASLVQIYSGFIFKGPGLVKEIVNHI.

FMN is bound by residues 62–66 and Thr-86; that span reads AGLDK. Lys-66 lines the substrate pocket. Residue 111 to 115 coordinates substrate; sequence NRMGF. FMN contacts are provided by Asn-139 and Asn-172. Residue Asn-172 participates in substrate binding. The active-site Nucleophile is the Ser-175. Asn-177 is a binding site for substrate. Lys-217 and Thr-245 together coordinate FMN. 246-247 is a substrate binding site; it reads NT. FMN is bound by residues Gly-268, Gly-297, and 318–319; that span reads YS.

This sequence belongs to the dihydroorotate dehydrogenase family. Type 2 subfamily. As to quaternary structure, monomer. FMN is required as a cofactor.

Its subcellular location is the cell membrane. It catalyses the reaction (S)-dihydroorotate + a quinone = orotate + a quinol. Its pathway is pyrimidine metabolism; UMP biosynthesis via de novo pathway; orotate from (S)-dihydroorotate (quinone route): step 1/1. In terms of biological role, catalyzes the conversion of dihydroorotate to orotate with quinone as electron acceptor. In Edwardsiella ictaluri (strain 93-146), this protein is Dihydroorotate dehydrogenase (quinone).